The primary structure comprises 183 residues: Holliday junction branch migration complex subunit RuvA (183 aa).

A domain I region spans residues 1–63; sequence MIVGLIGVVE…EDAHLLYGFL (63 aa). Residues 64–139 form a domain II region; sequence EEGEKILFER…FFIQDENRPA (76 aa). Ala139 is a region of interest (flexible linker). A domain III region spans residues 139–183; it reads ARNEVFLALESLGFKSAEINQVLKTLKPNLSIEAAIKEALQQLRS.

Belongs to the RuvA family. As to quaternary structure, homotetramer. Forms an RuvA(8)-RuvB(12)-Holliday junction (HJ) complex. HJ DNA is sandwiched between 2 RuvA tetramers; dsDNA enters through RuvA and exits via RuvB. An RuvB hexamer assembles on each DNA strand where it exits the tetramer. Each RuvB hexamer is contacted by two RuvA subunits (via domain III) on 2 adjacent RuvB subunits; this complex drives branch migration. In the full resolvosome a probable DNA-RuvA(4)-RuvB(12)-RuvC(2) complex forms which resolves the HJ.

It localises to the cytoplasm. The RuvA-RuvB-RuvC complex processes Holliday junction (HJ) DNA during genetic recombination and DNA repair, while the RuvA-RuvB complex plays an important role in the rescue of blocked DNA replication forks via replication fork reversal (RFR). RuvA specifically binds to HJ cruciform DNA, conferring on it an open structure. The RuvB hexamer acts as an ATP-dependent pump, pulling dsDNA into and through the RuvAB complex. HJ branch migration allows RuvC to scan DNA until it finds its consensus sequence, where it cleaves and resolves the cruciform DNA. This is Holliday junction branch migration complex subunit RuvA from Helicobacter pylori (strain ATCC 700392 / 26695) (Campylobacter pylori).